The following is a 128-amino-acid chain: Large ribosomal subunit protein bL20 (128 aa).

Belongs to the bacterial ribosomal protein bL20 family.

In terms of biological role, binds directly to 23S ribosomal RNA and is necessary for the in vitro assembly process of the 50S ribosomal subunit. It is not involved in the protein synthesizing functions of that subunit. The chain is Large ribosomal subunit protein bL20 from Anaplasma marginale (strain Florida).